A 911-amino-acid polypeptide reads, in one-letter code: Valine--tRNA ligase (911 aa).

A 'HIGH' region motif is present at residues 53 to 63 (PNVTGTLHLGH). Residues 533 to 537 (KMSKS) carry the 'KMSKS' region motif. Lys-536 is a binding site for ATP. Residues 845 to 910 (KEIERLTKEL…NRLAMLRSMQ (66 aa)) adopt a coiled-coil conformation.

This sequence belongs to the class-I aminoacyl-tRNA synthetase family. ValS type 1 subfamily. Monomer.

Its subcellular location is the cytoplasm. It carries out the reaction tRNA(Val) + L-valine + ATP = L-valyl-tRNA(Val) + AMP + diphosphate. Catalyzes the attachment of valine to tRNA(Val). As ValRS can inadvertently accommodate and process structurally similar amino acids such as threonine, to avoid such errors, it has a 'posttransfer' editing activity that hydrolyzes mischarged Thr-tRNA(Val) in a tRNA-dependent manner. The sequence is that of Valine--tRNA ligase from Symbiobacterium thermophilum (strain DSM 24528 / JCM 14929 / IAM 14863 / T).